The primary structure comprises 519 residues: Aspartokinase (519 aa).

Ser326 carries the phosphoserine modification. Thr328 is modified (phosphothreonine). An ACT domain is found at 436–518 (LVGKHMRNTT…MLVEKPWLYS (83 aa)).

It belongs to the aspartokinase family.

The catalysed reaction is L-aspartate + ATP = 4-phospho-L-aspartate + ADP. The protein operates within amino-acid biosynthesis; L-methionine biosynthesis via de novo pathway; L-homoserine from L-aspartate: step 1/3. It functions in the pathway amino-acid biosynthesis; L-threonine biosynthesis; L-threonine from L-aspartate: step 1/5. In terms of biological role, phosphorylates aspartate, the first step in the biosynthesis of amino acids that derive from aspartate (the aspartate family of amino acids), including methioinine and threonine, the latter of which is a precursor to isoleucine. The protein is Aspartokinase of Schizosaccharomyces pombe (strain 972 / ATCC 24843) (Fission yeast).